The sequence spans 220 residues: DNA mismatch repair protein MutH (220 aa).

It belongs to the MutH family.

The protein resides in the cytoplasm. In terms of biological role, sequence-specific endonuclease that cleaves unmethylated GATC sequences. It is involved in DNA mismatch repair. The polypeptide is DNA mismatch repair protein MutH (Buchnera aphidicola subsp. Baizongia pistaciae (strain Bp)).